A 233-amino-acid chain; its full sequence is tRNA (guanine-N(7)-)-methyltransferase (233 aa).

Positions 1 to 21 (MTEESHPLRGAGNFFGRRHGK) are disordered. Residues glutamate 64, glutamate 89, aspartate 116, and aspartate 138 each coordinate S-adenosyl-L-methionine. Aspartate 138 is an active-site residue. Substrate contacts are provided by residues lysine 142, aspartate 174, and 212–215 (TRYE).

Belongs to the class I-like SAM-binding methyltransferase superfamily. TrmB family.

It catalyses the reaction guanosine(46) in tRNA + S-adenosyl-L-methionine = N(7)-methylguanosine(46) in tRNA + S-adenosyl-L-homocysteine. It functions in the pathway tRNA modification; N(7)-methylguanine-tRNA biosynthesis. Its function is as follows. Catalyzes the formation of N(7)-methylguanine at position 46 (m7G46) in tRNA. This chain is tRNA (guanine-N(7)-)-methyltransferase, found in Brucella anthropi (strain ATCC 49188 / DSM 6882 / CCUG 24695 / JCM 21032 / LMG 3331 / NBRC 15819 / NCTC 12168 / Alc 37) (Ochrobactrum anthropi).